We begin with the raw amino-acid sequence, 573 residues long: MTELSRARYAELFGPTTGDRIRLADTDLLIEITEDRSGGPGLAGDEAVFGGGKVLRESMGQSRATRADGAPDTVITGAVIVDHWGIVKADIGIRDGRICGIGKAGNPDTMSGVHPDLVVGPSTEIIAGNGRILTAGAIDCHVHFICPQLMDEALGGGITTLIGGGTGPAEGSKATTVTPGAWHLARMLEATDHWPLNIALLGKGNTVSEAAMWEQLRAGASGFKLHEDWGSTPAAIDACLRVADASGVQVALHSDTLNEAGFVEDTLAAIAGRGIHAYHTEGAGGGHAPDIITVAAHPNVLPSSTNPTRPHTVNTLDEHLDMLMVCHHLSPSIPEDLAFAESRIRPSTIAAEDLLHDLGAISMIGSDSQAMGRIGEVVMRTWQTAHVMKRRRGALPGDGAADNARVRRYIAKYTICPAVAHGLDAEIGSVEVGKLADLVLWDPAFFGVRPHAVLKGGAIAWAAMGDANASIPTPQPVLPRPMFGAAAPVAAATSLHFVSEHALADGLAERLAVRRKLVAVKDVRRLTKTDMPLNDAMPRIEVDPDTFTVRVDGEVWAEQPATELPMAQRYFLF.

The Urease domain occupies 136–573 (GAIDCHVHFI…LPMAQRYFLF (438 aa)). Ni(2+) is bound by residues H141, H143, and K224. N6-carboxylysine is present on K224. H226 lines the substrate pocket. H253 and H279 together coordinate Ni(2+). H327 functions as the Proton donor in the catalytic mechanism. D367 contacts Ni(2+).

It belongs to the metallo-dependent hydrolases superfamily. Urease alpha subunit family. In terms of assembly, heterotrimer of UreA (gamma), UreB (beta) and UreC (alpha) subunits. Three heterotrimers associate to form the active enzyme. The cofactor is Ni cation. In terms of processing, carboxylation allows a single lysine to coordinate two nickel ions.

The protein localises to the cytoplasm. The enzyme catalyses urea + 2 H2O + H(+) = hydrogencarbonate + 2 NH4(+). It participates in nitrogen metabolism; urea degradation; CO(2) and NH(3) from urea (urease route): step 1/1. The sequence is that of Urease subunit alpha from Nocardia farcinica (strain IFM 10152).